Here is a 101-residue protein sequence, read N- to C-terminus: Small ribosomal subunit protein uS14 (101 aa).

This sequence belongs to the universal ribosomal protein uS14 family. Part of the 30S ribosomal subunit. Contacts proteins S3 and S10.

Functionally, binds 16S rRNA, required for the assembly of 30S particles and may also be responsible for determining the conformation of the 16S rRNA at the A site. The sequence is that of Small ribosomal subunit protein uS14 from Colwellia psychrerythraea (strain 34H / ATCC BAA-681) (Vibrio psychroerythus).